Consider the following 162-residue polypeptide: Ribosomal RNA large subunit methyltransferase H (162 aa).

S-adenosyl-L-methionine contacts are provided by residues Leu-78, Gly-109, and 128–133 (LSALTL).

This sequence belongs to the RNA methyltransferase RlmH family. In terms of assembly, homodimer.

It is found in the cytoplasm. It carries out the reaction pseudouridine(1915) in 23S rRNA + S-adenosyl-L-methionine = N(3)-methylpseudouridine(1915) in 23S rRNA + S-adenosyl-L-homocysteine + H(+). Functionally, specifically methylates the pseudouridine at position 1915 (m3Psi1915) in 23S rRNA. This Psychrobacter cryohalolentis (strain ATCC BAA-1226 / DSM 17306 / VKM B-2378 / K5) protein is Ribosomal RNA large subunit methyltransferase H.